The chain runs to 120 residues: Large ribosomal subunit protein uL18 (120 aa).

The protein belongs to the universal ribosomal protein uL18 family. In terms of assembly, part of the 50S ribosomal subunit; part of the 5S rRNA/L5/L18/L25 subcomplex. Contacts the 5S and 23S rRNAs.

Functionally, this is one of the proteins that bind and probably mediate the attachment of the 5S RNA into the large ribosomal subunit, where it forms part of the central protuberance. The sequence is that of Large ribosomal subunit protein uL18 from Bartonella quintana (strain Toulouse) (Rochalimaea quintana).